The following is a 131-amino-acid chain: Spermatocyte protein spe-27 (131 aa).

Positions 1 to 17 (MNKSLIFLLSFAYSCYS) are cleaved as a signal peptide.

In terms of biological role, required for spermiogenesis. This chain is Spermatocyte protein spe-27 (spe-27), found in Caenorhabditis elegans.